A 341-amino-acid chain; its full sequence is Probable UDP-glucuronate 4-epimerase (341 aa).

The active-site Proton acceptor is Tyr-152.

This sequence belongs to the NAD(P)-dependent epimerase/dehydratase family. NAD(+) is required as a cofactor.

The catalysed reaction is UDP-alpha-D-glucuronate = UDP-alpha-D-galacturonate. This is Probable UDP-glucuronate 4-epimerase from Rhizobium meliloti (strain 1021) (Ensifer meliloti).